The following is a 447-amino-acid chain: Asparagine--tRNA ligase (447 aa).

This sequence belongs to the class-II aminoacyl-tRNA synthetase family. Homodimer.

The protein resides in the cytoplasm. The catalysed reaction is tRNA(Asn) + L-asparagine + ATP = L-asparaginyl-tRNA(Asn) + AMP + diphosphate + H(+). In Mycoplasma mobile (strain ATCC 43663 / 163K / NCTC 11711) (Mesomycoplasma mobile), this protein is Asparagine--tRNA ligase.